Here is a 33-residue protein sequence, read N- to C-terminus: Protamine-1A (33 aa).

Residues 1–33 (PRRRRSSSRPVRRRRRPRRVSRRRRRRGGRRRR) form a disordered region.

As to expression, testis.

The protein resides in the nucleus. The protein localises to the chromosome. In terms of biological role, protamines substitute for histones in the chromatin of sperm during the haploid phase of spermatogenesis. They compact sperm DNA into a highly condensed, stable and inactive complex. This is Protamine-1A from Oncorhynchus mykiss (Rainbow trout).